The chain runs to 298 residues: MLKIGSHVSMSGKKMLLAASEEAVSYGATTFMIYTGAPQNTRRKPIEELNIEAGRKHMELNGIEEIIVHAPYIINVGNTTKPETFQLGVDFLRMEIERTSALGVAKQIVLHPGAHVGAGADAGIQQIIKGLNEVLTPEQTVNIALETMAGKGTECGRSFEEIAKIIDGVKYNEKLSVCFDTCHTHDAGYDIVNDFDGVLNEFDKIVGIDRLQVLHINDSKNVRGAGKDRHENIGFGHIGYKALHHIVHHPQLMHVPKILETPYVGEDKKDKKPPYKLEIEMLKNGNFDEGILEKIKAQ.

Zn(2+) is bound by residues histidine 69, histidine 111, glutamate 146, aspartate 180, histidine 183, histidine 215, aspartate 228, histidine 230, and glutamate 260.

It belongs to the AP endonuclease 2 family. The cofactor is Zn(2+).

It catalyses the reaction Endonucleolytic cleavage to 5'-phosphooligonucleotide end-products.. Its function is as follows. Endonuclease IV plays a role in DNA repair. It cleaves phosphodiester bonds at apurinic or apyrimidinic (AP) sites, generating a 3'-hydroxyl group and a 5'-terminal sugar phosphate. The sequence is that of Probable endonuclease 4 from Bacillus cereus (strain G9842).